Consider the following 229-residue polypeptide: UPF0758 protein MM_2791 (229 aa).

The MPN domain occupies 106 to 228 (KISSPKDVYT…YVSLKDEGFV (123 aa)). Residues His-177, His-179, and Asp-190 each coordinate Zn(2+). Residues 177–190 (HNHPSGDPSPSRED) carry the JAMM motif motif.

Belongs to the UPF0758 family.

The protein is UPF0758 protein MM_2791 of Methanosarcina mazei (strain ATCC BAA-159 / DSM 3647 / Goe1 / Go1 / JCM 11833 / OCM 88) (Methanosarcina frisia).